Consider the following 378-residue polypeptide: MRVLGLISGTSADGIDVAIAEIQGFQADLSVALLAFETIAYEPSLRDRILEVAAGFPLSVAELTALDAAIAQAFATAAQTLIQQHGAVDLIGSHGQTVYHQPPQAGQLGWSVQLGWGAAIAQQTGITTVSNFRSADLALGGQGAPLVPAVDLWLLGSDSENRCVQNIGGIGNLTWLPRRDHPDWQSEVRGWDTGPGNSLLDLAVQKLSQGRLSYDDGGQWAATGQIDQVLCDRWLQEDDYFRLPPPKSTGRERYGWQFLETWAAELDRLTAADQLATLTEFTAASIVNNYRHFLPALPDRVLVCGGGLHNQFLLQRLQQQLPTVKIASTDDFGVNSQAKEAIAIAVLAYWRQHNVPGNLPAVTGASGPALLGDVFART.

Residue 9–16 (GTSADGID) coordinates ATP.

This sequence belongs to the anhydro-N-acetylmuramic acid kinase family.

It catalyses the reaction 1,6-anhydro-N-acetyl-beta-muramate + ATP + H2O = N-acetyl-D-muramate 6-phosphate + ADP + H(+). Its pathway is amino-sugar metabolism; 1,6-anhydro-N-acetylmuramate degradation. The protein operates within cell wall biogenesis; peptidoglycan recycling. Catalyzes the specific phosphorylation of 1,6-anhydro-N-acetylmuramic acid (anhMurNAc) with the simultaneous cleavage of the 1,6-anhydro ring, generating MurNAc-6-P. Is required for the utilization of anhMurNAc either imported from the medium or derived from its own cell wall murein, and thus plays a role in cell wall recycling. The protein is Anhydro-N-acetylmuramic acid kinase of Synechococcus elongatus (strain ATCC 33912 / PCC 7942 / FACHB-805) (Anacystis nidulans R2).